Reading from the N-terminus, the 301-residue chain is Probable alpha-L-glutamate ligase (301 aa).

Residues 104–287 form the ATP-grasp domain; sequence LQLLSRRGIG…VAGIIIEHLE (184 aa). Residues Lys141, 178–179, Asp187, and 211–213 each bind ATP; these read EY and RSN. Residues Asp248, Glu260, and Asn262 each contribute to the Mg(2+) site. Mn(2+)-binding residues include Asp248, Glu260, and Asn262.

This sequence belongs to the RimK family. The cofactor is Mg(2+). It depends on Mn(2+) as a cofactor.

This Pseudomonas fluorescens (strain SBW25) protein is Probable alpha-L-glutamate ligase.